Here is a 275-residue protein sequence, read N- to C-terminus: Formamidopyrimidine-DNA glycosylase (275 aa).

Pro2 acts as the Schiff-base intermediate with DNA in catalysis. The Proton donor role is filled by Glu3. The Proton donor; for beta-elimination activity role is filled by Lys58. The DNA site is built by His93, Arg111, and Arg156. The FPG-type zinc-finger motif lies at 241-275 (FAYDRAGLPCRVCGTPIRQIVQGQRSTYFCPTCQR). Arg265 (proton donor; for delta-elimination activity) is an active-site residue.

Belongs to the FPG family. Monomer. Requires Zn(2+) as cofactor.

It carries out the reaction Hydrolysis of DNA containing ring-opened 7-methylguanine residues, releasing 2,6-diamino-4-hydroxy-5-(N-methyl)formamidopyrimidine.. The catalysed reaction is 2'-deoxyribonucleotide-(2'-deoxyribose 5'-phosphate)-2'-deoxyribonucleotide-DNA = a 3'-end 2'-deoxyribonucleotide-(2,3-dehydro-2,3-deoxyribose 5'-phosphate)-DNA + a 5'-end 5'-phospho-2'-deoxyribonucleoside-DNA + H(+). Functionally, involved in base excision repair of DNA damaged by oxidation or by mutagenic agents. Acts as a DNA glycosylase that recognizes and removes damaged bases. Has a preference for oxidized purines, such as 7,8-dihydro-8-oxoguanine (8-oxoG). Has AP (apurinic/apyrimidinic) lyase activity and introduces nicks in the DNA strand. Cleaves the DNA backbone by beta-delta elimination to generate a single-strand break at the site of the removed base with both 3'- and 5'-phosphates. This is Formamidopyrimidine-DNA glycosylase from Burkholderia vietnamiensis (strain G4 / LMG 22486) (Burkholderia cepacia (strain R1808)).